A 222-amino-acid chain; its full sequence is Putative ankyrin repeat protein L36 (222 aa).

ANK repeat units follow at residues 1 to 14 (MVKY…NVDA), 15 to 44 (QNSR…NIYA), 45 to 74 (NDNH…NIRA), 76 to 104 (EDSA…TNYE), 105 to 134 (YSDY…KITD), 136 to 161 (AMFM…SLPC), and 163 to 191 (SYSE…KINK).

This is Putative ankyrin repeat protein L36 from Acanthamoeba polyphaga (Amoeba).